A 664-amino-acid chain; its full sequence is DNA ligase (664 aa).

Residues 32–36 (DKEYD) and 80–81 (SL) each bind NAD(+). Lysine 122 (N6-AMP-lysine intermediate) is an active-site residue. NAD(+) is bound by residues arginine 144, glutamate 178, and lysine 314. Zn(2+) is bound by residues cysteine 407, cysteine 410, cysteine 423, and cysteine 429. Positions 587–664 (IDENPFMGKT…NEEEFSNKIK (78 aa)) constitute a BRCT domain.

It belongs to the NAD-dependent DNA ligase family. LigA subfamily. The cofactor is Mg(2+). It depends on Mn(2+) as a cofactor.

It catalyses the reaction NAD(+) + (deoxyribonucleotide)n-3'-hydroxyl + 5'-phospho-(deoxyribonucleotide)m = (deoxyribonucleotide)n+m + AMP + beta-nicotinamide D-nucleotide.. Functionally, DNA ligase that catalyzes the formation of phosphodiester linkages between 5'-phosphoryl and 3'-hydroxyl groups in double-stranded DNA using NAD as a coenzyme and as the energy source for the reaction. It is essential for DNA replication and repair of damaged DNA. The protein is DNA ligase of Clostridium botulinum (strain Kyoto / Type A2).